Here is a 184-residue protein sequence, read N- to C-terminus: Holliday junction branch migration complex subunit RuvA (184 aa).

The segment at 1-64 (MIKAIEGIIT…EDANLLYGFI (64 aa)) is domain I. Positions 65–137 (KESEQRIFEM…LSDAKFGEIN (73 aa)) are domain II. A region of interest (flexible linker) is located at residue Asn137. Residues 138 to 184 (SMPSYQNEAFMALESLGFKRDRISKVLNECSSNDTASLIKEALKKLA) are domain III.

This sequence belongs to the RuvA family. As to quaternary structure, homotetramer. Forms an RuvA(8)-RuvB(12)-Holliday junction (HJ) complex. HJ DNA is sandwiched between 2 RuvA tetramers; dsDNA enters through RuvA and exits via RuvB. An RuvB hexamer assembles on each DNA strand where it exits the tetramer. Each RuvB hexamer is contacted by two RuvA subunits (via domain III) on 2 adjacent RuvB subunits; this complex drives branch migration. In the full resolvosome a probable DNA-RuvA(4)-RuvB(12)-RuvC(2) complex forms which resolves the HJ.

It localises to the cytoplasm. The RuvA-RuvB-RuvC complex processes Holliday junction (HJ) DNA during genetic recombination and DNA repair, while the RuvA-RuvB complex plays an important role in the rescue of blocked DNA replication forks via replication fork reversal (RFR). RuvA specifically binds to HJ cruciform DNA, conferring on it an open structure. The RuvB hexamer acts as an ATP-dependent pump, pulling dsDNA into and through the RuvAB complex. HJ branch migration allows RuvC to scan DNA until it finds its consensus sequence, where it cleaves and resolves the cruciform DNA. The sequence is that of Holliday junction branch migration complex subunit RuvA from Campylobacter fetus subsp. fetus (strain 82-40).